Here is a 150-residue protein sequence, read N- to C-terminus: Ribosomal RNA large subunit methyltransferase H (150 aa).

S-adenosyl-L-methionine contacts are provided by residues isoleucine 71, alanine 100, and 118–123 (LSEMTF).

This sequence belongs to the RNA methyltransferase RlmH family. Homodimer.

It is found in the cytoplasm. The enzyme catalyses pseudouridine(1915) in 23S rRNA + S-adenosyl-L-methionine = N(3)-methylpseudouridine(1915) in 23S rRNA + S-adenosyl-L-homocysteine + H(+). Specifically methylates the pseudouridine at position 1915 (m3Psi1915) in 23S rRNA. The sequence is that of Ribosomal RNA large subunit methyltransferase H from Helicobacter acinonychis (strain Sheeba).